The following is a 1043-amino-acid chain: RNA cytidine acetyltransferase (1043 aa).

Residues 285–294 (GRGKSAAVGL) and R462 contribute to the ATP site. The 186-residue stretch at 551–736 (VLMAPIDKSR…VPVYIRQNSN (186 aa)) folds into the N-acetyltransferase domain. Acetyl-CoA-binding positions include 622-624 (VAV), 629-635 (QSMGYGG), and R723. A disordered region spans residues 1020 to 1043 (IPDAKDPANKNAKKKKRFSSGGRR). Residues 1030 to 1043 (NAKKKKRFSSGGRR) are compositionally biased toward basic residues.

This sequence belongs to the RNA cytidine acetyltransferase family. NAT10 subfamily. Part of the small subunit (SSU) processome, composed of more than 70 proteins and the RNA chaperone small nucleolar RNA (snoRNA) U3.

It is found in the nucleus. Its subcellular location is the nucleolus. It catalyses the reaction a cytidine in 18S rRNA + acetyl-CoA + ATP + H2O = an N(4)-acetylcytidine in 18S rRNA + ADP + phosphate + CoA + H(+). It carries out the reaction a cytidine in tRNA + acetyl-CoA + ATP + H2O = an N(4)-acetylcytidine in tRNA + ADP + phosphate + CoA + H(+). Its function is as follows. RNA cytidine acetyltransferase with specificity toward both 18S rRNA and tRNAs. Catalyzes the formation of N(4)-acetylcytidine (ac4C) in 18S rRNA. Required for early nucleolar cleavages of precursor rRNA at sites A0, A1 and A2 during 18S rRNA synthesis. Catalyzes the formation of ac4C in serine and leucine tRNAs. Requires a tRNA-binding adapter protein for full tRNA acetyltransferase activity but not for 18S rRNA acetylation. Part of the small subunit (SSU) processome, first precursor of the small eukaryotic ribosomal subunit. During the assembly of the SSU processome in the nucleolus, many ribosome biogenesis factors, an RNA chaperone and ribosomal proteins associate with the nascent pre-rRNA and work in concert to generate RNA folding, modifications, rearrangements and cleavage as well as targeted degradation of pre-ribosomal RNA by the RNA exosome. The protein is RNA cytidine acetyltransferase of Caenorhabditis elegans.